We begin with the raw amino-acid sequence, 446 residues long: WD repeat domain phosphoinositide-interacting protein 1 (446 aa).

7 WD repeats span residues 3–42 (AEAADAPPGGVESALSCFSFNQDCTSLATGTKAGYKLFSL), 47–88 (QLDQ…VYHF), 92–126 (TEICNYSYSSNILSIRLNRQRLLVCLEESIYIHNI), 131–173 (LLKT…LYDG), 177–216 (KTVCTIAAHEGTLAAITFNASGSKLASASEKGTVIRVFSV), 222–261 (LYEFRRGMKRYVTISSLVFSMDSQFLCASSNTETVHIFKL), and 304–343 (FATARLNFSGQRNICTLSTIQKLPRLLVASSSGHLYMYNL). Residues 131 to 136 (LLKTLL) carry the Nuclear receptor interaction motif. The short motif at 225-228 (FRRG) is the L/FRRG motif element. The tract at residues 386–406 (ARPSASSASTVPGYSEDGGAL) is disordered.

It belongs to the WD repeat PROPPIN family. In terms of assembly, interacts with androgen receptor (AR) and the estrogen receptors ESR1 and ESR2. Interacts with WIPI2. Interacts with WDR45. Interacts with ATG16L1. May interact with NUDC. In terms of tissue distribution, ubiquitously expressed. Highly expressed in skeletal muscle, heart, testis, pancreas and placenta. Highly expressed in G361, Sk-mel-28, Sk-mel-13, WM852 and WM451 cells. Up-regulated in a variety of tumor tissues.

The protein resides in the golgi apparatus. It localises to the trans-Golgi network. The protein localises to the endosome. Its subcellular location is the cytoplasmic vesicle. It is found in the clathrin-coated vesicle. The protein resides in the preautophagosomal structure membrane. It localises to the cytoplasm. The protein localises to the cytoskeleton. Component of the autophagy machinery that controls the major intracellular degradation process by which cytoplasmic materials are packaged into autophagosomes and delivered to lysosomes for degradation. Plays an important role in starvation- and calcium-mediated autophagy, as well as in mitophagy. Functions downstream of the ULK1 and PI3-kinases that produce phosphatidylinositol 3-phosphate (PtdIns3P) on membranes of the endoplasmic reticulum once activated. Binds phosphatidylinositol 3-phosphate (PtdIns3P), and maybe other phosphoinositides including PtdIns3,5P2 and PtdIns5P, and is recruited to phagophore assembly sites at the endoplasmic reticulum membranes. There, it assists WIPI2 in the recruitment of ATG12-ATG5-ATG16L1, a complex that directly controls the elongation of the nascent autophagosomal membrane. Together with WDR45/WIPI4, promotes ATG2 (ATG2A or ATG2B)-mediated lipid transfer by enhancing ATG2-association with phosphatidylinositol 3-monophosphate (PI3P)-containing membranes. Involved in xenophagy of Staphylococcus aureus. Invading S.aureus cells become entrapped in autophagosome-like WIPI1 positive vesicles targeted for lysosomal degradation. Also plays a distinct role in controlling the transcription of melanogenic enzymes and melanosome maturation, a process that is distinct from starvation-induced autophagy. May also regulate the trafficking of proteins involved in the mannose-6-phosphate receptor (MPR) recycling pathway. This Homo sapiens (Human) protein is WD repeat domain phosphoinositide-interacting protein 1 (WIPI1).